Reading from the N-terminus, the 647-residue chain is Pumilio homolog 3 (647 aa).

Positions 1 to 10 (MEVKGKKKIT) are enriched in basic residues. The tract at residues 1-123 (MEVKGKKKIT…KKKKELKQNR (123 aa)) is disordered. An N6-acetyllysine modification is found at Lys-33. Residues 59 to 68 (PGKKRVKQFK) are compositionally biased toward basic residues. The segment covering 93–123 (FQPDGKSDESAAKKPKWDDFKKKKKELKQNR) has biased composition (basic and acidic residues). The Nuclear localization signal motif lies at 105–117 (KKPKWDDFKKKKK). A PUM-HD domain is found at 142 to 509 (ESLRRKDCDK…VVLDKSVCVL (368 aa)). Pumilio repeat units lie at residues 176–211 (HDST…LSKA), 212–247 (KYSR…MLRH), 248–276 (SEAS…ELYG), 288–324 (PTLE…VIKH), 325–360 (SLVH…LAHT), 361–396 (HDGA…IANG), 397–434 (QYSH…IVND), 435–503 (KYGR…VVLD), 504–550 (KSVC…IAEH), 551–595 (PAGH…WASI), and 596–635 (NRGA…KSTS).

Interacts with PARP1 (via catalytic domain).

The protein localises to the nucleus. Its subcellular location is the nucleolus. The protein resides in the nucleoplasm. It is found in the chromosome. In terms of biological role, inhibits the poly(ADP-ribosyl)ation activity of PARP1 and the degradation of PARP1 by CASP3 following genotoxic stress. Binds to double-stranded RNA or DNA without sequence specificity. Involved in development of the eye and of primordial germ cells. This chain is Pumilio homolog 3, found in Rattus norvegicus (Rat).